Reading from the N-terminus, the 215-residue chain is uncharacterized protein (215 aa).

This is an uncharacterized protein from Ostreid herpesvirus 1 (isolate France) (OsHV-1).